A 184-amino-acid chain; its full sequence is UPF0316 protein BLi00691/BL01474 (184 aa).

3 consecutive transmembrane segments (helical) span residues 9–29, 41–61, and 67–87; these read GVIMVGIILVINIIYVTFLTL, LAAFIGTIEMLVYVVGLGLVL, and IQNVIAYAVGFGIGIIVGTKI.

It belongs to the UPF0316 family.

The protein localises to the cell membrane. The polypeptide is UPF0316 protein BLi00691/BL01474 (Bacillus licheniformis (strain ATCC 14580 / DSM 13 / JCM 2505 / CCUG 7422 / NBRC 12200 / NCIMB 9375 / NCTC 10341 / NRRL NRS-1264 / Gibson 46)).